Consider the following 325-residue polypeptide: Outer spore wall protein LDS1 (325 aa).

Residues Met-1–Thr-91 lie on the Cytoplasmic side of the membrane. The chain crosses the membrane as a helical span at residues Met-92–Ala-112. The Extracellular segment spans residues Thr-113–Tyr-118. Residues Thr-119–Leu-139 traverse the membrane as a helical segment. The Cytoplasmic segment spans residues Gln-140–Leu-208. The helical transmembrane segment at Phe-209–Ile-229 threads the bilayer. Residues Ser-230–Tyr-263 are Extracellular-facing. Residues Ala-264–Ile-284 form a helical membrane-spanning segment. The Cytoplasmic segment spans residues Ser-285–Gln-325.

It belongs to the LDS family.

Its subcellular location is the prospore membrane. The protein resides in the lipid droplet. The protein localises to the spore wall. Its function is as follows. Involved in spore wall assembly. The polypeptide is Outer spore wall protein LDS1 (Saccharomyces cerevisiae (strain ATCC 204508 / S288c) (Baker's yeast)).